A 305-amino-acid polypeptide reads, in one-letter code: Probable lipid kinase YegS-like (305 aa).

Positions 1 to 129 (MTQRRAMLIL…VDLGEVGGKL (129 aa)) constitute a DAGKc domain. ATP contacts are provided by residues Thr39, 65-71 (GDGTLRD), and Thr92. Residues Leu210, Asp213, and Leu215 each coordinate Mg(2+). The active-site Proton acceptor is the Glu268.

This sequence belongs to the diacylglycerol/lipid kinase family. YegS lipid kinase subfamily. Requires Mg(2+) as cofactor. The cofactor is Ca(2+).

It is found in the cytoplasm. Functionally, probably phosphorylates lipids; the in vivo substrate is unknown. The polypeptide is Probable lipid kinase YegS-like (Pseudomonas syringae pv. tomato (strain ATCC BAA-871 / DC3000)).